The sequence spans 550 residues: uncharacterized protein (550 aa).

The N-terminal stretch at 1-13 is a signal peptide; the sequence is MAGALFEPSFAAA. The disordered stretch occupies residues 312 to 358; the sequence is DAQPDPHLSGDEPPSRPLTPETTLFEALTPDPEPDPPATHAPAELIT.

This sequence to M.tuberculosis Rv3776.

This is an uncharacterized protein from Mycobacterium tuberculosis (strain CDC 1551 / Oshkosh).